Reading from the N-terminus, the 327-residue chain is Beta-ketoacyl-[acyl-carrier-protein] synthase III 2 (327 aa).

Active-site residues include C114 and H251. Positions 252 to 256 (SANLR) are ACP-binding. N281 is an active-site residue.

This sequence belongs to the thiolase-like superfamily. FabH family. As to quaternary structure, homodimer.

The protein localises to the cytoplasm. The catalysed reaction is malonyl-[ACP] + acetyl-CoA + H(+) = 3-oxobutanoyl-[ACP] + CO2 + CoA. The protein operates within lipid metabolism; fatty acid biosynthesis. Its function is as follows. Catalyzes the condensation reaction of fatty acid synthesis by the addition to an acyl acceptor of two carbons from malonyl-ACP. Catalyzes the first condensation reaction which initiates fatty acid synthesis and may therefore play a role in governing the total rate of fatty acid production. Possesses both acetoacetyl-ACP synthase and acetyl transacylase activities. Its substrate specificity determines the biosynthesis of branched-chain and/or straight-chain of fatty acids. In Bacillus cereus (strain ATCC 14579 / DSM 31 / CCUG 7414 / JCM 2152 / NBRC 15305 / NCIMB 9373 / NCTC 2599 / NRRL B-3711), this protein is Beta-ketoacyl-[acyl-carrier-protein] synthase III 2.